The primary structure comprises 309 residues: tRNA dimethylallyltransferase (309 aa).

Position 11–18 (11–18 (GPTASGKS)) interacts with ATP. Residue 13–18 (TASGKS) coordinates substrate. Interaction with substrate tRNA stretches follow at residues 36 to 39 (DSMQ) and 160 to 164 (QRLIR).

This sequence belongs to the IPP transferase family. Monomer. The cofactor is Mg(2+).

The catalysed reaction is adenosine(37) in tRNA + dimethylallyl diphosphate = N(6)-dimethylallyladenosine(37) in tRNA + diphosphate. Catalyzes the transfer of a dimethylallyl group onto the adenine at position 37 in tRNAs that read codons beginning with uridine, leading to the formation of N6-(dimethylallyl)adenosine (i(6)A). The chain is tRNA dimethylallyltransferase from Rickettsia felis (strain ATCC VR-1525 / URRWXCal2) (Rickettsia azadi).